The chain runs to 187 residues: NADH-dependent FMN reductase SfnF (187 aa).

This sequence belongs to the SsuE family.

It carries out the reaction FMNH2 + NAD(+) = FMN + NADH + 2 H(+). Involved in the dimethyl sulfide degradation pathway. Catalyzes the NADH-dependent reduction of FMN. The polypeptide is NADH-dependent FMN reductase SfnF (Pseudomonas fluorescens (strain Pf0-1)).